Here is a 105-residue protein sequence, read N- to C-terminus: Replication restart protein PriB (105 aa).

The 102-residue stretch at 1-102 (MTTNRLVLSG…LHAEQIEFID (102 aa)) folds into the SSB domain.

It belongs to the PriB family. Homodimer. Interacts with PriA and DnaT. Component of the replication restart primosome. Primosome assembly occurs via a 'hand-off' mechanism. PriA binds to replication forks, subsequently PriB then DnaT bind; DnaT then displaces ssDNA to generate the helicase loading substrate.

Involved in the restart of stalled replication forks, which reloads the replicative helicase on sites other than the origin of replication; the PriA-PriB pathway is the major replication restart pathway. During primosome assembly it facilitates complex formation between PriA and DnaT on DNA; stabilizes PriA on DNA. Stimulates the DNA unwinding activity of PriA helicase. This Yersinia pseudotuberculosis serotype O:1b (strain IP 31758) protein is Replication restart protein PriB.